A 421-amino-acid chain; its full sequence is MAESWLRLCGAGPGEEAGPEGGMEEPDALDDSLTSLQWLQEFSILNAKAPTLPPGGTDPLGYHQVPGLVAPGSPLAADPACLGQPHTPGKPTSSCTSRSAPPGLQAPPPDDVDYATNPHVKPPYSYATLICMAMQASKATKITLSAIYKWITDNFCYFRHADPTWQNSIRHNLSLNKCFIKVPREKDEPGKGGFWRIDPQYAERLLSGAFKKRRLPPVHIHPAFARQAAQEPSTAPWGGPLTVNREAQQLLQEFEEATGEGGWGTGEGRLGHKRKQPLPKRVAKVLRPPSTLLLTQEEQGELEPLKGNFDWEAIFEAGALGEELSSLEGLELSPPLSPSSHGEVDLTVHGRHINCPATWGPPVEQATDSLDFDETFLATSFLQHPWDESSSGCLPPEPLFEAGDATLAADLQDWASVGAFL.

Disordered regions lie at residues 1–32 (MAES…LDDS) and 79–110 (PACL…PPPD). Gly residues predominate over residues 11–21 (AGPGEEAGPEG). Residues 90 to 99 (KPTSSCTSRS) are compositionally biased toward polar residues. A DNA-binding region (fork-head) is located at residues 120–210 (VKPPYSYATL…YAERLLSGAF (91 aa)). Residues 256-277 (EATGEGGWGTGEGRLGHKRKQP) are disordered. Residues 259-268 (GEGGWGTGEG) are compositionally biased toward gly residues.

It belongs to the FOXJ1 family. As to expression, pulmonary epithelium, testis and oviduct.

The protein resides in the nucleus. Its function is as follows. Transcription factor specifically required for the formation of motile cilia. Acts by activating transcription of genes that mediate assembly of motile cilia, such as CFAP157. Binds the DNA consensus sequences 5'-HWDTGTTTGTTTA-3' or 5'-KTTTGTTGTTKTW-3' (where H is not G, W is A or T, D is not C, and K is G or T). Activates the transcription of a variety of ciliary proteins in the developing brain and lung. The chain is Forkhead box protein J1 (Foxj1) from Rattus norvegicus (Rat).